Consider the following 147-residue polypeptide: Hemoglobin subunit gamma-2 (147 aa).

The 145-residue stretch at 3-147 (HFTEEDKATI…VASALSSRYH (145 aa)) folds into the Globin domain. The residue at position 13 (threonine 13) is a Phosphothreonine. Serine 45, serine 51, and serine 53 each carry phosphoserine. Residue lysine 60 is modified to N6-acetyllysine. Histidine 64 contributes to the heme b binding site. The residue at position 83 (lysine 83) is an N6-acetyllysine. Histidine 93 serves as a coordination point for heme b. Cysteine 94 bears the S-nitrosocysteine mark. Phosphoserine occurs at positions 140, 143, and 144.

It belongs to the globin family. In terms of assembly, heterotetramer of two alpha chains and two gamma chains in fetal hemoglobin (Hb F). As to expression, red blood cells.

Gamma chains make up the fetal hemoglobin F, in combination with alpha chains. The polypeptide is Hemoglobin subunit gamma-2 (HBG2) (Pongo pygmaeus (Bornean orangutan)).